A 69-amino-acid chain; its full sequence is Pleurain-A3 (69 aa).

Residues 1–22 form the signal peptide; sequence MFTLKKTLLLLFFLGTISISLC. Positions 23 to 43 are excised as a propeptide; that stretch reads KQARDADEDDGRKMTEEEVKR. C63 and C69 are disulfide-bonded.

Belongs to the frog skin active peptide (FSAP) family. Pleurain subfamily. Expressed by the skin glands.

The protein localises to the secreted. Functionally, antimicrobial peptide. Has activity against Gram-positive and -negative bacteria, and fungi. Has little hemolytic activity on red blood cells. The chain is Pleurain-A3 from Nidirana pleuraden (Yunnan pond frog).